The primary structure comprises 242 residues: Leucyl/phenylalanyl-tRNA--protein transferase (242 aa).

The protein belongs to the L/F-transferase family.

The protein localises to the cytoplasm. The catalysed reaction is N-terminal L-lysyl-[protein] + L-leucyl-tRNA(Leu) = N-terminal L-leucyl-L-lysyl-[protein] + tRNA(Leu) + H(+). It carries out the reaction N-terminal L-arginyl-[protein] + L-leucyl-tRNA(Leu) = N-terminal L-leucyl-L-arginyl-[protein] + tRNA(Leu) + H(+). It catalyses the reaction L-phenylalanyl-tRNA(Phe) + an N-terminal L-alpha-aminoacyl-[protein] = an N-terminal L-phenylalanyl-L-alpha-aminoacyl-[protein] + tRNA(Phe). Functions in the N-end rule pathway of protein degradation where it conjugates Leu, Phe and, less efficiently, Met from aminoacyl-tRNAs to the N-termini of proteins containing an N-terminal arginine or lysine. In Alcanivorax borkumensis (strain ATCC 700651 / DSM 11573 / NCIMB 13689 / SK2), this protein is Leucyl/phenylalanyl-tRNA--protein transferase.